The chain runs to 386 residues: MAVKVLVVDDSGFFRRRVTEILSSDPNIVVVGTATNGKEAIEQALALKPDVITMDYEMPMMDGITAVRHIMQRIPTPVLMFSSLTHEGARVTLDALDAGAVDFLPKNFEDISRNPQKVKQLLCEKINSISRSNRRSSGFGSASAAPAAPAPSTLSSRASAPAPAPARAVPSRTATPAAAPAAPTSHAPAHPTTSGTAKRKAYKLVAIGTSTGGPVALQRVLTQLPANFPAPLVLIQHMPAAFTKAFAERLDKLCKISVKEAEDGDVLRPGLALLAPGGKQMMVDGRGTVKILPGDERLNYKPCVDITFGSAAKSYGDKVLSVVLTGMGADGREGARLLKQAGSTVWAQDEASCVIYGMPMAIVKAELADAIYSLDDIGRHLVEACL.

The 118-residue stretch at 4-121 folds into the Response regulatory domain; that stretch reads KVLVVDDSGF…SRNPQKVKQL (118 aa). Aspartate 55 bears the 4-aspartylphosphate mark. Residues 132 to 194 are compositionally biased toward low complexity; it reads SNRRSSGFGS…SHAPAHPTTS (63 aa). The tract at residues 132 to 197 is disordered; the sequence is SNRRSSGFGS…PAHPTTSGTA (66 aa). The CheB-type methylesterase domain maps to 191-383; the sequence is PTTSGTAKRK…LDDIGRHLVE (193 aa). Residues serine 210, histidine 237, and aspartate 330 contribute to the active site.

This sequence belongs to the CheB family. Phosphorylated by CheA. Phosphorylation of the N-terminal regulatory domain activates the methylesterase activity.

It is found in the cytoplasm. It carries out the reaction [protein]-L-glutamate 5-O-methyl ester + H2O = L-glutamyl-[protein] + methanol + H(+). The enzyme catalyses L-glutaminyl-[protein] + H2O = L-glutamyl-[protein] + NH4(+). Its function is as follows. Involved in chemotaxis. Part of a chemotaxis signal transduction system that modulates chemotaxis in response to various stimuli. Catalyzes the demethylation of specific methylglutamate residues introduced into the chemoreceptors (methyl-accepting chemotaxis proteins or MCP) by CheR. Also mediates the irreversible deamidation of specific glutamine residues to glutamic acid. The chain is Protein-glutamate methylesterase/protein-glutamine glutaminase 3 from Pseudomonas syringae pv. syringae (strain B728a).